The primary structure comprises 294 residues: 33 kDa chaperonin (294 aa).

2 disulfides stabilise this stretch: Cys-239/Cys-241 and Cys-272/Cys-275.

The protein belongs to the HSP33 family. In terms of processing, under oxidizing conditions two disulfide bonds are formed involving the reactive cysteines. Under reducing conditions zinc is bound to the reactive cysteines and the protein is inactive.

Its subcellular location is the cytoplasm. Its function is as follows. Redox regulated molecular chaperone. Protects both thermally unfolding and oxidatively damaged proteins from irreversible aggregation. Plays an important role in the bacterial defense system toward oxidative stress. The chain is 33 kDa chaperonin from Listeria welshimeri serovar 6b (strain ATCC 35897 / DSM 20650 / CCUG 15529 / CIP 8149 / NCTC 11857 / SLCC 5334 / V8).